Consider the following 22-residue polypeptide: Fuctinin-1 (22 aa).

The tract at residues 1-22 (SASPGLPKGEKEQQEAIEHIDE) is disordered. Basic and acidic residues predominate over residues 8–22 (KGEKEQQEAIEHIDE).

This sequence to human SET/PHAPII protein. In terms of assembly, oligomer.

It localises to the cytoplasm. Its function is as follows. Has a role in the physiological regulation of fucosylation processes. The sequence is that of Fuctinin-1 from Rattus norvegicus (Rat).